A 502-amino-acid chain; its full sequence is Glycerol kinase (502 aa).

Thr13 is a binding site for ADP. Positions 13, 14, and 15 each coordinate ATP. Thr13 is a sn-glycerol 3-phosphate binding site. ADP is bound at residue Arg17. Arg83, Glu84, Tyr136, and Asp246 together coordinate sn-glycerol 3-phosphate. 5 residues coordinate glycerol: Arg83, Glu84, Tyr136, Asp246, and Gln247. Residues Thr268 and Gly311 each coordinate ADP. 4 residues coordinate ATP: Thr268, Gly311, Gln315, and Gly412. Residues Gly412 and Asn416 each coordinate ADP.

It belongs to the FGGY kinase family.

It carries out the reaction glycerol + ATP = sn-glycerol 3-phosphate + ADP + H(+). It functions in the pathway polyol metabolism; glycerol degradation via glycerol kinase pathway; sn-glycerol 3-phosphate from glycerol: step 1/1. With respect to regulation, inhibited by fructose 1,6-bisphosphate (FBP). Its function is as follows. Key enzyme in the regulation of glycerol uptake and metabolism. Catalyzes the phosphorylation of glycerol to yield sn-glycerol 3-phosphate. This is Glycerol kinase from Francisella tularensis subsp. tularensis (strain FSC 198).